We begin with the raw amino-acid sequence, 1399 residues long: DNA-directed RNA polymerase subunit beta' (1399 aa).

Zn(2+) is bound by residues C70, C72, C85, and C88. Mg(2+)-binding residues include D460, D462, and D464. 4 residues coordinate Zn(2+): C814, C888, C895, and C898. Residues 1367 to 1399 (SERKRQRDLGKPQRVSASEAEAALTEALNSSGN) are disordered. Over residues 1382-1399 (SASEAEAALTEALNSSGN) the composition is skewed to low complexity.

Belongs to the RNA polymerase beta' chain family. As to quaternary structure, the RNAP catalytic core consists of 2 alpha, 1 beta, 1 beta' and 1 omega subunit. When a sigma factor is associated with the core the holoenzyme is formed, which can initiate transcription. Mg(2+) is required as a cofactor. The cofactor is Zn(2+).

It catalyses the reaction RNA(n) + a ribonucleoside 5'-triphosphate = RNA(n+1) + diphosphate. DNA-dependent RNA polymerase catalyzes the transcription of DNA into RNA using the four ribonucleoside triphosphates as substrates. The polypeptide is DNA-directed RNA polymerase subunit beta' (Pseudomonas paraeruginosa (strain DSM 24068 / PA7) (Pseudomonas aeruginosa (strain PA7))).